The chain runs to 230 residues: Ribose-5-phosphate isomerase A (230 aa).

Residues Thr32–Thr35, Asp85–Asp88, and Lys98–Gly101 each bind substrate. The Proton acceptor role is filled by Glu107. Lys125 serves as a coordination point for substrate.

The protein belongs to the ribose 5-phosphate isomerase family. Homodimer.

It catalyses the reaction aldehydo-D-ribose 5-phosphate = D-ribulose 5-phosphate. Its pathway is carbohydrate degradation; pentose phosphate pathway; D-ribose 5-phosphate from D-ribulose 5-phosphate (non-oxidative stage): step 1/1. Its function is as follows. Catalyzes the reversible conversion of ribose-5-phosphate to ribulose 5-phosphate. The protein is Ribose-5-phosphate isomerase A of Burkholderia ambifaria (strain MC40-6).